Consider the following 396-residue polypeptide: Elongation factor Tu (396 aa).

In terms of domain architecture, tr-type G spans 10-205 (KPHVNIGTIG…AVDESIPDPV (196 aa)). The segment at 19–26 (GHVDHGKT) is G1. 19–26 (GHVDHGKT) contacts GTP. Residue T26 coordinates Mg(2+). Positions 62–66 (GITIN) are G2. Residues 83–86 (DAPG) are G3. GTP is bound by residues 83 to 87 (DAPGH) and 138 to 141 (NKAD). Residues 138–141 (NKAD) form a G4 region. The G5 stretch occupies residues 175–177 (SAL).

This sequence belongs to the TRAFAC class translation factor GTPase superfamily. Classic translation factor GTPase family. EF-Tu/EF-1A subfamily. In terms of assembly, monomer.

The protein resides in the cytoplasm. It carries out the reaction GTP + H2O = GDP + phosphate + H(+). In terms of biological role, GTP hydrolase that promotes the GTP-dependent binding of aminoacyl-tRNA to the A-site of ribosomes during protein biosynthesis. The sequence is that of Elongation factor Tu from Rhodococcus jostii (strain RHA1).